Consider the following 360-residue polypeptide: Ankyrin repeat domain-containing protein 2 (360 aa).

Positions Pro-5–Lys-120 are may mediate interaction with PML, p53/TP53 and YBX1. Ser-99 is subject to Phosphoserine; by PKB/AKT2. The interval Lys-126–Val-147 is disordered. Acidic residues predominate over residues Pro-138–Val-147. 5 ANK repeats span residues Val-147–Thr-176, Phe-180–Phe-209, Leu-213–Val-242, Leu-246–Ala-275, and Glu-279–Thr-308. Basic and acidic residues predominate over residues Ala-330–Gly-342. Positions Ala-330–Gln-360 are disordered.

Interacts with ID3; both proteins cooperate in myoblast differentiation. Interacts with TTN/titin. Interacts (via ANK repeats) with TCAP; the interaction is direct. Interacts with TJP1 (via PDZ domains). Interacts with PML; the interaction is direct. Interacts with p53/TP53. Interacts with YBX1. Interacts with AKT2. Post-translationally, phosphorylation at Ser-99 by PKB/AKT2 in response to oxidative stress induces translocation to the nucleus and negatively regulates myoblast differentiation. In terms of tissue distribution, mostly expressed in skeletal and cardiac muscles. Found in slow fibers. Also expressed in kidney, but to a lower extent (at protein level).

It is found in the cytoplasm. It localises to the myofibril. Its subcellular location is the sarcomere. The protein resides in the i band. The protein localises to the cytosol. It is found in the nucleus. It localises to the PML body. In terms of biological role, functions as a negative regulator of myocyte differentiation. May interact with both sarcoplasmic structural proteins and nuclear proteins to regulate gene expression during muscle development and in response to muscle stress. This is Ankyrin repeat domain-containing protein 2 (ANKRD2) from Homo sapiens (Human).